Reading from the N-terminus, the 188-residue chain is ATP synthase subunit b (188 aa).

A helical membrane pass occupies residues 21-41; sequence ILPHLGELIVGIIFAIIIYAV.

Belongs to the ATPase B chain family. F-type ATPases have 2 components, F(1) - the catalytic core - and F(0) - the membrane proton channel. F(1) has five subunits: alpha(3), beta(3), gamma(1), delta(1), epsilon(1). F(0) has three main subunits: a(1), b(2) and c(10-14). The alpha and beta chains form an alternating ring which encloses part of the gamma chain. F(1) is attached to F(0) by a central stalk formed by the gamma and epsilon chains, while a peripheral stalk is formed by the delta and b chains.

It localises to the cell membrane. In terms of biological role, f(1)F(0) ATP synthase produces ATP from ADP in the presence of a proton or sodium gradient. F-type ATPases consist of two structural domains, F(1) containing the extramembraneous catalytic core and F(0) containing the membrane proton channel, linked together by a central stalk and a peripheral stalk. During catalysis, ATP synthesis in the catalytic domain of F(1) is coupled via a rotary mechanism of the central stalk subunits to proton translocation. Functionally, component of the F(0) channel, it forms part of the peripheral stalk, linking F(1) to F(0). In Kineococcus radiotolerans (strain ATCC BAA-149 / DSM 14245 / SRS30216), this protein is ATP synthase subunit b.